The sequence spans 91 residues: Proline, histidine and glycine-rich protein 1 (91 aa).

Residues 1–91 are disordered; it reads MHPGGKGHCG…HCGPHPGPHH (91 aa). 3 stretches are compositionally biased toward gly residues: residues 33-42, 49-63, and 70-82; these read HPGHGPGHCP, GHGG…GHCP, and GHGG…GPGH.

The protein is Proline, histidine and glycine-rich protein 1 (Phgr1) of Mus musculus (Mouse).